The primary structure comprises 134 residues: uncharacterized protein (134 aa).

This is an uncharacterized protein from Streptomyces coelicolor (strain ATCC BAA-471 / A3(2) / M145).